We begin with the raw amino-acid sequence, 351 residues long: Ion-translocating oxidoreductase complex subunit D (351 aa).

4 helical membrane passes run 18-38 (IMLL…YFFG), 40-60 (GSLI…GAVL), 87-107 (LPPL…IVIA), and 121-141 (PAMV…TSWL). Residue Thr185 is modified to FMN phosphoryl threonine. Transmembrane regions (helical) follow at residues 211-231 (VLAG…GLLL), 241-261 (IPVS…MIAP), 264-284 (FASP…FFIA), 298-318 (LIFG…GGYP), and 320-340 (GVAF…HYTQ).

It belongs to the NqrB/RnfD family. As to quaternary structure, the complex is composed of six subunits: RnfA, RnfB, RnfC, RnfD, RnfE and RnfG. Requires FMN as cofactor.

The protein resides in the cell inner membrane. Its function is as follows. Part of a membrane-bound complex that couples electron transfer with translocation of ions across the membrane. In Yersinia pseudotuberculosis serotype O:1b (strain IP 31758), this protein is Ion-translocating oxidoreductase complex subunit D.